Here is a 635-residue protein sequence, read N- to C-terminus: Threonine--tRNA ligase (635 aa).

Residues 1 to 58 form the TGS domain; it reads MIRVICDNETFELPTGSTAADFASKIKNSHYFAGVVINDQIKDLSTTLSEGDVLKFVT. The tract at residues 237-528 is catalytic; sequence DHRVLGTKLD…LIEHFKGRFP (292 aa). Zn(2+) is bound by residues cysteine 328, histidine 379, and histidine 505.

This sequence belongs to the class-II aminoacyl-tRNA synthetase family. In terms of assembly, homodimer. Requires Zn(2+) as cofactor.

Its subcellular location is the cytoplasm. It carries out the reaction tRNA(Thr) + L-threonine + ATP = L-threonyl-tRNA(Thr) + AMP + diphosphate + H(+). Its function is as follows. Catalyzes the attachment of threonine to tRNA(Thr) in a two-step reaction: L-threonine is first activated by ATP to form Thr-AMP and then transferred to the acceptor end of tRNA(Thr). Also edits incorrectly charged L-seryl-tRNA(Thr). This Chlamydia felis (strain Fe/C-56) (Chlamydophila felis) protein is Threonine--tRNA ligase.